The chain runs to 434 residues: Methylenetetrahydrofolate--tRNA-(uracil-5-)-methyltransferase TrmFO (434 aa).

9 to 14 is an FAD binding site; it reads GAGLAG.

Belongs to the MnmG family. TrmFO subfamily. Requires FAD as cofactor.

It localises to the cytoplasm. It carries out the reaction uridine(54) in tRNA + (6R)-5,10-methylene-5,6,7,8-tetrahydrofolate + NADH + H(+) = 5-methyluridine(54) in tRNA + (6S)-5,6,7,8-tetrahydrofolate + NAD(+). The catalysed reaction is uridine(54) in tRNA + (6R)-5,10-methylene-5,6,7,8-tetrahydrofolate + NADPH + H(+) = 5-methyluridine(54) in tRNA + (6S)-5,6,7,8-tetrahydrofolate + NADP(+). Its function is as follows. Catalyzes the folate-dependent formation of 5-methyl-uridine at position 54 (M-5-U54) in all tRNAs. The protein is Methylenetetrahydrofolate--tRNA-(uracil-5-)-methyltransferase TrmFO of Bacillus licheniformis (strain ATCC 14580 / DSM 13 / JCM 2505 / CCUG 7422 / NBRC 12200 / NCIMB 9375 / NCTC 10341 / NRRL NRS-1264 / Gibson 46).